The primary structure comprises 292 residues: Tetratricopeptide repeat protein 1 (292 aa).

The segment at 23 to 125 (TQEAECAGPP…STRLKEEGNE (103 aa)) is disordered. 2 stretches are compositionally biased toward basic and acidic residues: residues 45–55 (LLRDDEAHLQE) and 75–85 (GADKVENKSNE). Phosphoserine occurs at positions 83 and 90. Over residues 99 to 125 (ELEKNMSDEEKQKRREESTRLKEEGNE) the composition is skewed to basic and acidic residues. TPR repeat units lie at residues 116–149 (STRLKEEGNEQFKKGDYIEAESSYSRALEMCPSC), 155–188 (SILFSNRAAARMKQDKKEMAINDCSKAIQLNPSY), and 189–222 (IRAILRRAELYEKTDKLDEALEDYKSILEKDPSI).

Interacts with the GAP domain of NF1. Interacts (via TPR repeats) with HSP90AA1 and HSPA8.

The chain is Tetratricopeptide repeat protein 1 (TTC1) from Homo sapiens (Human).